Consider the following 225-residue polypeptide: DNA repair protein RecO (225 aa).

The protein belongs to the RecO family.

In terms of biological role, involved in DNA repair and RecF pathway recombination. The polypeptide is DNA repair protein RecO (Clostridium perfringens (strain ATCC 13124 / DSM 756 / JCM 1290 / NCIMB 6125 / NCTC 8237 / Type A)).